The primary structure comprises 223 residues: Probable transaldolase (223 aa).

Lysine 92 functions as the Schiff-base intermediate with substrate in the catalytic mechanism.

The protein belongs to the transaldolase family. Type 3B subfamily.

It localises to the cytoplasm. The catalysed reaction is D-sedoheptulose 7-phosphate + D-glyceraldehyde 3-phosphate = D-erythrose 4-phosphate + beta-D-fructose 6-phosphate. It participates in carbohydrate degradation; pentose phosphate pathway; D-glyceraldehyde 3-phosphate and beta-D-fructose 6-phosphate from D-ribose 5-phosphate and D-xylulose 5-phosphate (non-oxidative stage): step 2/3. Functionally, transaldolase is important for the balance of metabolites in the pentose-phosphate pathway. This chain is Probable transaldolase, found in Thermus thermophilus (strain ATCC BAA-163 / DSM 7039 / HB27).